Here is a 185-residue protein sequence, read N- to C-terminus: Ribosome-recycling factor (185 aa).

Residues 136-161 (MDSLKTDEKKGEIGEDDRKRRETEVQ) form a disordered region.

This sequence belongs to the RRF family.

The protein localises to the cytoplasm. In terms of biological role, responsible for the release of ribosomes from messenger RNA at the termination of protein biosynthesis. May increase the efficiency of translation by recycling ribosomes from one round of translation to another. This is Ribosome-recycling factor from Rhizorhabdus wittichii (strain DSM 6014 / CCUG 31198 / JCM 15750 / NBRC 105917 / EY 4224 / RW1) (Sphingomonas wittichii).